A 515-amino-acid polypeptide reads, in one-letter code: SWI/SNF global transcription activator complex subunit snf59 (515 aa).

The interval 1–226 (MEEEDITLEH…IHHVDSKNEE (226 aa)) is disordered. Composition is skewed to basic and acidic residues over residues 7-37 (TLEH…DNSN), 50-59 (EEPKYHDNSN), 73-85 (EPEH…KEST), 94-103 (EEPKHHDNSN), and 116-125 (EEPKHHDSSN). A compositionally biased stretch (polar residues) spans 126–136 (KESTNLDNSNM). The span at 140–226 (ENQKNFKIEE…IHHVDSKNEE (87 aa)) shows a compositional bias: basic and acidic residues.

The protein belongs to the RSC7/SWP82 family. SWP82 subfamily. As to quaternary structure, component of the SWI/SNF global transcription activator complex composed of at least arp9, arp42, snf5, snf22, snf30, snf59, sol1, ssr1, ssr2, ssr3, ssr4 and tfg3.

The protein resides in the nucleus. Functionally, component of the SWI/SNF complex, an ATP-dependent chromatin remodeling complex, which is required for the positive and negative regulation of gene expression of a large number of genes. It changes chromatin structure by altering DNA-histone contacts within a nucleosome, leading eventually to a change in nucleosome position, thus facilitating or repressing binding of gene-specific transcription factors. This is SWI/SNF global transcription activator complex subunit snf59 (snf59) from Schizosaccharomyces pombe (strain 972 / ATCC 24843) (Fission yeast).